The chain runs to 1103 residues: Kinesin-like protein KIF1C (1103 aa).

In terms of domain architecture, Kinesin motor spans serine 5–isoleucine 348. ATP is bound at residue glycine 97–serine 104. Position 295 is a phosphoserine (serine 295). 2 coiled-coil regions span residues asparagine 359–glutamate 388 and glutamate 438–methionine 479. Residues alanine 400–glutamate 438 form a disordered region. Residue serine 494 is modified to Phosphoserine. Residues threonine 523–glycine 590 form the FHA domain. The stretch at glutamate 633–serine 674 forms a coiled coil. 2 positions are modified to phosphoserine: serine 674 and serine 676. Disordered regions lie at residues glycine 808–alanine 828, leucine 874–valine 924, and glutamine 950–valine 1103. Residues glycine 813–glutamate 822 show a composition bias toward gly residues. A coiled-coil region spans residues alanine 828–isoleucine 872. The segment covering proline 893–serine 910 has biased composition (low complexity). At serine 915 the chain carries Phosphoserine. The span at glutamine 953–leucine 962 shows a compositional bias: gly residues. Over residues proline 1021 to arginine 1031 the composition is skewed to basic residues. The residue at position 1033 (serine 1033) is a Phosphoserine. Position 1041 is an omega-N-methylarginine (arginine 1041). Residues proline 1062–threonine 1083 show a composition bias toward pro residues. Threonine 1083 is modified (phosphothreonine). Residue serine 1092 is modified to Phosphoserine. The span at serine 1092–valine 1103 shows a compositional bias: basic and acidic residues.

This sequence belongs to the TRAFAC class myosin-kinesin ATPase superfamily. Kinesin family. Unc-104 subfamily. As to quaternary structure, monomer. Interacts with BICD2. In terms of processing, phosphorylated on tyrosine residues. As to expression, expressed in all tissues examined, with most abundant expression in heart and skeletal muscle.

It is found in the cytoplasm. Its subcellular location is the cytoskeleton. Its function is as follows. Motor required for the retrograde transport of Golgi vesicles to the endoplasmic reticulum. Has a microtubule plus end-directed motility. In Homo sapiens (Human), this protein is Kinesin-like protein KIF1C (KIF1C).